We begin with the raw amino-acid sequence, 486 residues long: MSAANPETPNSTISREASTQSSSAAASQGWVLPEGKIVPNTVFVGGIDARMDETEIGSCFGRYGSVKEVKIITNRTGVSKGYGFVSFVNDVDVQKIVGSQIHFHGKKLKLGPAIRKQKLCARHVQPRPLVVNPPPPPQFQNVWRNPNTETYLQPQITPNPVTQHVQAYSAYPHSPGQVITGCQLLVYNYQEYPTYPDSAFQVTTGYQLPVYNYQPFPAYPRSPFQVTAGYQLPVYNYQAFPAYPNSPFQVATGYQFPVYNYQPFPAYPSSPFQVTAGYQLPVYNYQAFPAYPNSPFQVATGYQFPVYNYQAFPAYPNSPVQVTTGYQLPVYNYQAFPAYPNSPFQVATGYQFPVYNYQAFPAYPNSPVQVTTGYQLPVYNYQAFPAYPNSPFQVATGYQFPVYNYQAFPAYPNSPVQVTTGYQLPVYNYQAFPAYPNSAVQVTTGYQFHVYNYQMPPQCPVGEQRRNLWTEAYKWWYLVCLIQRRD.

Over residues 1 to 10 the composition is skewed to polar residues; it reads MSAANPETPN. The segment at 1 to 27 is disordered; sequence MSAANPETPNSTISREASTQSSSAAAS. The segment covering 11-27 has biased composition (low complexity); the sequence is STISREASTQSSSAAAS. In terms of domain architecture, RRM spans 40–115; that stretch reads NTVFVGGIDA…KKLKLGPAIR (76 aa). DAZ domains lie at 167–190, 191–214, 215–238, 239–262, 263–286, 287–310, 311–334, 335–358, 359–382, 383–406, 407–430, and 431–454; these read AYSA…YNYQ, EYPT…YNYQ, PFPA…YNYQ, and AFPA…YNYQ.

This sequence belongs to the RRM DAZ family. In terms of assembly, forms a heterodimer with BOLL and DAZL. Interacts with PUM2, DAZAP1, DAZAP2, DZIP1 and DZIP3. As to expression, testis specific.

The protein resides in the cytoplasm. The protein localises to the nucleus. RNA-binding protein that plays an essential role in spermatogenesis. May act by binding to the 3'-UTR of mRNAs and regulating their translation. The chain is Deleted in azoospermia protein 3 (DAZ3) from Homo sapiens (Human).